Consider the following 515-residue polypeptide: METLNVDHEDTISSEQEHRAHTKSDTDMPPISGGRDFIRQFAAESKKLWWLAGPAIFTSFCQYSLGAVTQILAGHVNTLALAAVSIQNSVISGFSVGIMLGMGSALATLCGQAYGAGQLEMMGIYLQRSWIILNSCALLLCLFYVFATPLLSLLGQSPEISKAAGKFSLWMIPQLFAYAVNFATAKFLQAQSKVIAMAVIAATVLLQHTLLSWLLMLKLRWGMAGGAVVLNMSWWLIDVTQIVYICGGSSGRAWSGLSWMAFKNLRGFARLSLASAVMVCLEVWYFMALILFAGYLKNPQVSVAALSICMNILGWPIMVAFGFNAAVSVRESNELGAEHPRRAKFLLIVAMITSVSIGIVISVTLIVLRDKYPAMFSDDEEVRVLVKQLTPLLALTIVINNIQPVLSGVAVGAGWQGIVAYVNIGCYYLCGIPIGLVLGYKMELGVKGIWTGMLTGTVVQTSVLLFIIYRTNWKKEASLAEARIKKWGDQSNKREEIDLCEEDENNSNGENNHRK.

The segment covering 1–26 has biased composition (basic and acidic residues); that stretch reads METLNVDHEDTISSEQEHRAHTKSDT. The interval 1-30 is disordered; sequence METLNVDHEDTISSEQEHRAHTKSDTDMPP. 12 helical membrane passes run 48-68, 90-110, 131-151, 167-187, 194-214, 225-245, 276-296, 303-323, 347-367, 392-412, 418-438, and 448-468; these read LWWLAGPAIFTSFCQYSLGAV, VISGFSVGIMLGMGSALATLC, IILNSCALLLCLFYVFATPLL, FSLWMIPQLFAYAVNFATAKF, VIAMAVIAATVLLQHTLLSWL, GGAVVLNMSWWLIDVTQIVYI, AVMVCLEVWYFMALILFAGYL, VAALSICMNILGWPIMVAFGF, LIVAMITSVSIGIVISVTLIV, LLALTIVINNIQPVLSGVAVG, IVAYVNIGCYYLCGIPIGLVL, and GIWTGMLTGTVVQTSVLLFII. Basic and acidic residues predominate over residues 488-497; that stretch reads GDQSNKREEI. The disordered stretch occupies residues 488–515; that stretch reads GDQSNKREEIDLCEEDENNSNGENNHRK. Residues 506–515 show a composition bias toward low complexity; sequence NSNGENNHRK.

Belongs to the multi antimicrobial extrusion (MATE) (TC 2.A.66.1) family.

The protein localises to the membrane. This is Protein DETOXIFICATION 32 from Arabidopsis thaliana (Mouse-ear cress).